The following is a 623-amino-acid chain: Chaperone protein HtpG (623 aa).

The tract at residues 1–341 (MEKREFKAES…SQDLSLNISR (341 aa)) is a; substrate-binding. Residues 342-549 (EMLQHDRQLS…EGEVSIEMEK (208 aa)) are b. The c stretch occupies residues 550 to 623 (ILSAMPNNQG…FTNDICKLMK (74 aa)).

This sequence belongs to the heat shock protein 90 family. Homodimer.

It localises to the cytoplasm. Functionally, molecular chaperone. Has ATPase activity. The protein is Chaperone protein HtpG of Clostridium perfringens (strain ATCC 13124 / DSM 756 / JCM 1290 / NCIMB 6125 / NCTC 8237 / Type A).